Reading from the N-terminus, the 236-residue chain is Glycosylphosphatidylinositol anchor biosynthesis protein 11 (236 aa).

Transmembrane regions (helical) follow at residues Thr-40–Thr-60 and Gly-65–Ile-85. An N-linked (GlcNAc...) asparagine glycan is attached at Asn-99. Helical transmembrane passes span Leu-107–Ile-127, Glu-139–Tyr-159, Ile-184–Leu-204, and Ile-215–Phe-235.

It belongs to the PIGF family.

Its subcellular location is the endoplasmic reticulum membrane. It participates in glycolipid biosynthesis; glycosylphosphatidylinositol-anchor biosynthesis. Acts in the GPI biosynthetic pathway between GlcNAc-PI synthesis and GPI transfer to protein. This chain is Glycosylphosphatidylinositol anchor biosynthesis protein 11 (GPI11), found in Debaryomyces hansenii (strain ATCC 36239 / CBS 767 / BCRC 21394 / JCM 1990 / NBRC 0083 / IGC 2968) (Yeast).